The primary structure comprises 98 residues: Large ribosomal subunit protein uL23 (98 aa).

This sequence belongs to the universal ribosomal protein uL23 family. Part of the 50S ribosomal subunit. Contacts protein L29, and trigger factor when it is bound to the ribosome.

Its function is as follows. One of the early assembly proteins it binds 23S rRNA. One of the proteins that surrounds the polypeptide exit tunnel on the outside of the ribosome. Forms the main docking site for trigger factor binding to the ribosome. The protein is Large ribosomal subunit protein uL23 of Herpetosiphon aurantiacus (strain ATCC 23779 / DSM 785 / 114-95).